The sequence spans 95 residues: MLHTLHRSPWLTDFAALLRLLSEGDELLLLQDGVTAAVDGNRYLESLRNAPIKVYALNEDLIARGLTGQISNDIILIDYTDFVRLTVKHPSQMAW.

It belongs to the DsrH/TusB family. As to quaternary structure, heterohexamer, formed by a dimer of trimers. The hexameric TusBCD complex contains 2 copies each of TusB, TusC and TusD. The TusBCD complex interacts with TusE.

The protein resides in the cytoplasm. Functionally, part of a sulfur-relay system required for 2-thiolation of 5-methylaminomethyl-2-thiouridine (mnm(5)s(2)U) at tRNA wobble positions. This Escherichia coli (strain K12 / MC4100 / BW2952) protein is Protein TusB.